We begin with the raw amino-acid sequence, 77 residues long: Large ribosomal subunit protein uL29 (77 aa).

It belongs to the universal ribosomal protein uL29 family.

The polypeptide is Large ribosomal subunit protein uL29 (Cutibacterium acnes (strain DSM 16379 / KPA171202) (Propionibacterium acnes)).